A 167-amino-acid polypeptide reads, in one-letter code: NAD(P)H-quinone oxidoreductase subunit I, chloroplastic (167 aa).

4Fe-4S ferredoxin-type domains are found at residues 55–84 and 95–124; these read GRIH…VDWK and LNYS…MTEE. Residues C64, C67, C70, C74, C104, C107, C110, and C114 each contribute to the [4Fe-4S] cluster site.

The protein belongs to the complex I 23 kDa subunit family. In terms of assembly, NDH is composed of at least 16 different subunits, 5 of which are encoded in the nucleus. [4Fe-4S] cluster serves as cofactor.

The protein localises to the plastid. It localises to the chloroplast thylakoid membrane. The catalysed reaction is a plastoquinone + NADH + (n+1) H(+)(in) = a plastoquinol + NAD(+) + n H(+)(out). The enzyme catalyses a plastoquinone + NADPH + (n+1) H(+)(in) = a plastoquinol + NADP(+) + n H(+)(out). In terms of biological role, NDH shuttles electrons from NAD(P)H:plastoquinone, via FMN and iron-sulfur (Fe-S) centers, to quinones in the photosynthetic chain and possibly in a chloroplast respiratory chain. The immediate electron acceptor for the enzyme in this species is believed to be plastoquinone. Couples the redox reaction to proton translocation, and thus conserves the redox energy in a proton gradient. The sequence is that of NAD(P)H-quinone oxidoreductase subunit I, chloroplastic from Arabis hirsuta (Hairy rock-cress).